The primary structure comprises 118 residues: Small ribosomal subunit protein uS13 (118 aa).

The tract at residues 94–118 (SLPLRGQRTKTNARTRKGPRKPIKK) is disordered.

Belongs to the universal ribosomal protein uS13 family. In terms of assembly, part of the 30S ribosomal subunit. Forms a loose heterodimer with protein S19. Forms two bridges to the 50S subunit in the 70S ribosome.

In terms of biological role, located at the top of the head of the 30S subunit, it contacts several helices of the 16S rRNA. In the 70S ribosome it contacts the 23S rRNA (bridge B1a) and protein L5 of the 50S subunit (bridge B1b), connecting the 2 subunits; these bridges are implicated in subunit movement. Contacts the tRNAs in the A and P-sites. The polypeptide is Small ribosomal subunit protein uS13 (Idiomarina loihiensis (strain ATCC BAA-735 / DSM 15497 / L2-TR)).